We begin with the raw amino-acid sequence, 100 residues long: MNADPVLSYNFDAIEYSVRQEIHTTAARFNAALQELRSQIAPLQQLWTREAAAAYHAEQLKWHQAASALNEILIDLGNAVRHGADDVAHADRRAAGAWAR.

It belongs to the WXG100 family. ESAT-6 subfamily. Forms a tight 1:1 complex with EsxU.

It is found in the secreted. The protein is ESAT-6-like protein EsxT of Mycobacterium tuberculosis (strain CDC 1551 / Oshkosh).